Reading from the N-terminus, the 548-residue chain is Folylpolyglutamate synthase (548 aa).

130–133 (GKGS) lines the ATP pocket. Mg(2+)-binding residues include S157, E234, and H262. ATP is bound by residues R382 and D396.

Belongs to the folylpolyglutamate synthase family. A monovalent cation serves as cofactor.

The protein localises to the mitochondrion inner membrane. Its subcellular location is the mitochondrion matrix. It is found in the cytoplasm. It catalyses the reaction (6S)-5,6,7,8-tetrahydrofolyl-(gamma-L-Glu)(n) + L-glutamate + ATP = (6S)-5,6,7,8-tetrahydrofolyl-(gamma-L-Glu)(n+1) + ADP + phosphate + H(+). Its pathway is cofactor biosynthesis; tetrahydrofolylpolyglutamate biosynthesis. In terms of biological role, catalyzes conversion of folates to polyglutamate derivatives allowing concentration of folate compounds in the cell and the intracellular retention of these cofactors, which are important substrates for most of the folate-dependent enzymes that are involved in one-carbon transfer reactions involved in purine, pyrimidine and amino acid synthesis. Required for methionine synthesis and maintenance of intact mitochondrial DNA. Involved in telomere maintenance. This chain is Folylpolyglutamate synthase, found in Saccharomyces cerevisiae (strain AWRI1631) (Baker's yeast).